Here is a 611-residue protein sequence, read N- to C-terminus: Autophagy-related protein 22-2 (611 aa).

The segment at 1-24 (MRADDNPSARSLHAQFPGDDTRPT) is disordered. A helical membrane pass occupies residues 35–55 (YGWAAEVFTVCAMGSFLPITL). N-linked (GlcNAc...) asparagine glycosylation occurs at Asn78. 3 helical membrane passes run 116–136 (TASFAMYTFSVSVFVQAVLII), 151–171 (LLVAFAVIGSVCTMLFLSVVP), and 175–195 (IVGALFAIVANTCFGASFVLL). An N-linked (GlcNAc...) asparagine glycan is attached at Asn221. 2 consecutive transmembrane segments (helical) span residues 286 to 306 (IGIGYIGAVILQIICILVIIA) and 316 to 336 (LVLFLIGLWWFVFTIPAALWL). Asn353 carries N-linked (GlcNAc...) asparagine glycosylation. Transmembrane regions (helical) follow at residues 380–400 (ILLFLTAWFLLSDGIATVSGT), 414–434 (AALGLINVVTMMAGVFGAFSW), 449–469 (IIACILLFELIPIYGLLGFVP), 483–503 (WEMFPLGIVYGLVMGGLSSYC), 521–541 (ALYAITDKGSSIFGPAIVGLI), and 551–571 (AFVFLAVLIFLPLPLMLLVDV).

This sequence belongs to the ATG22 family.

The protein localises to the vacuole membrane. In terms of biological role, vacuolar effluxer which mediate the efflux of amino acids resulting from autophagic degradation. The release of autophagic amino acids allows the maintenance of protein synthesis and viability during nitrogen starvation. The polypeptide is Autophagy-related protein 22-2 (atg22-2) (Aspergillus clavatus (strain ATCC 1007 / CBS 513.65 / DSM 816 / NCTC 3887 / NRRL 1 / QM 1276 / 107)).